The chain runs to 355 residues: Tetraacyldisaccharide 4'-kinase (355 aa).

48–55 (SVGGTGKT) contacts ATP.

This sequence belongs to the LpxK family.

It catalyses the reaction a lipid A disaccharide + ATP = a lipid IVA + ADP + H(+). It functions in the pathway glycolipid biosynthesis; lipid IV(A) biosynthesis; lipid IV(A) from (3R)-3-hydroxytetradecanoyl-[acyl-carrier-protein] and UDP-N-acetyl-alpha-D-glucosamine: step 6/6. In terms of biological role, transfers the gamma-phosphate of ATP to the 4'-position of a tetraacyldisaccharide 1-phosphate intermediate (termed DS-1-P) to form tetraacyldisaccharide 1,4'-bis-phosphate (lipid IVA). This chain is Tetraacyldisaccharide 4'-kinase, found in Pelodictyon phaeoclathratiforme (strain DSM 5477 / BU-1).